Reading from the N-terminus, the 351-residue chain is Alcohol dehydrogenase 2 (351 aa).

Residues Cys-47, His-70, Cys-101, Cys-104, Cys-107, Cys-115, and Cys-157 each contribute to the Zn(2+) site. NAD(+) contacts are provided by residues 181–187 (GAGGGLG), Asp-205, Lys-210, 272–274 (VGL), and Arg-344.

The protein belongs to the zinc-containing alcohol dehydrogenase family. As to quaternary structure, homotetramer. Requires Zn(2+) as cofactor.

It carries out the reaction a secondary alcohol + NAD(+) = a ketone + NADH + H(+). Its function is as follows. Versatile oxidoreductase that catalyzes the oxidation and reduction of a broad range of substrates. Preferentially oxidizes secondary alcohols. Has highest activity for racemic 2-octanol. Is also an efficient reductase for selected substrates. Substrate selectivity was found for medium chain lipophilic ketones. Has highest activities for 2-octanone, 2-nonanone and 2-decanone. The enzyme is (S)-selective in the reduction direction and produces exclusively the (S)-enantiomer. This chain is Alcohol dehydrogenase 2 (ADH2), found in Yarrowia lipolytica (strain CLIB 122 / E 150) (Yeast).